Reading from the N-terminus, the 1265-residue chain is MSEKNLKVGARVELTGKDLLGTVAYVGMTSFAVGKWVGVVLDEPKGKNSGSIKGQQYFQCDENCGMFVRPTQLRLLEAAPGSRRSIEDVSGATPTAAQPTKARLSSSRTSLSSSRQSLLGSRTQLTTSLSERTASSSSIGPRKSLAPQNSKDKESPSTSLAEGAPAASGGNGAASHASSKRASFVETGFLEILKPQFTPSQPLRSPSFTMPSNSGAEDKVALLEAQKTSAELQAQLADLTEKLETLKQRRNEDKERLREFDKMKIQFEQLQEFRTKIMGAQASLQKELLRAKQEAKDAIEAKEQHAQEMADLADNVEMITLDKEMAEEKADTLQLELESSKERIEELEVDLELLRSEMQNKAESAIGNISGGGDSPGLSTYEFKQLEQQNIRLKETLVRLRDLSAHDKHDIQKLSKELEMKRSEVTELERTKEKLSAKIDELEAIVADLQEQVDAALGAEEMVEQLAEKKMELEDKVKLLEEEIAQLEALEEVHEQLVESNHELELDLREELDLANGAKKEVLRERDAAIETIYDRDQTIVKFRELVQKLNDQLTELRDRNSSNEKESLQDPSLKMVTETIDYKQMFAESKAYTRAIDVQLRQIELSQANEHVQMLTAFMPESFMSRGGDHDSILVILLISRIVFKCDIVVSQTRERFPPVDAITREAVTQGHAVQQYAFKCRLLHYVHSLQCALHQILYGLNSCQPDTLLRAGSSLPEMVAQEKIVDGIIELLKSNQLDENSTTDNIEKCVAFFNAMNSVLLAGEQLLNEIQMIRDCVASLGAACESILSDTAIAKVIIQEAGATSDSVLLIQFLNENMESVRQQVKLIKRRLPSDQHVIKSGLSQHKVEAMRGLAQNISRIMSAMHQATKQSLAAIVSTIESDNAAEHTLPQEKYWALLTASCERIYEQDDRGPTQNFKTLLAQANSDLQLIAQHLLDKEYDIISAANNASNQQKSGAHSTPITQRAQLIKKQLEQKNVLAATLENREADVKQLKVAAKMKQNELSEMQIRKDLAEKKLSVLQNEYEHAVDKWKQKYEETSLQLQLKEKEFEETMDHLQSDIDALESEKSDLRDKLKLNSTTGKVQPGSESHSPHNISLSGNTSTAPGISNVSYSAPAGTAPVVAEEVELLKNAFNQERNQRLRLQAQDMRAKLSQFEPLHVPQPQDQRITALESELTRMKHAWVLSLLQVRSQDSVNSGTRIDAVALQRRNQPVPLKGEISSKASQLASDILTEYLQRKPHRATHGQFASFPTVDVKRVLQI.

One can recognise a CAP-Gly domain in the interval 27-69 (GMTSFAVGKWVGVVLDEPKGKNSGSIKGQQYFQCDENCGMFVR). Residues 81-179 (GSRRSIEDVS…GNGAASHASS (99 aa)) are disordered. Phosphoserine occurs at positions 85, 110, 114, 117, and 121. 2 stretches are compositionally biased toward low complexity: residues 103–138 (RLSS…SSSS) and 161–177 (AEGA…ASHA). Ser183 is subject to Phosphoserine. Coiled-coil stretches lie at residues 213-570 (NSGA…ESLQ), 812-836 (LIQF…RLPS), and 967-1084 (QRAQ…NSTT). The interval 1082 to 1106 (STTGKVQPGSESHSPHNISLSGNTS) is disordered. At Ser1117 the chain carries Phosphoserine. Residues 1128–1160 (EEVELLKNAFNQERNQRLRLQAQDMRAKLSQFE) adopt a coiled-coil conformation.

Belongs to the dynactin 150 kDa subunit family. As to quaternary structure, monomer and homodimer. Subunit of dynactin, a multiprotein complex part of a tripartite complex with dynein and a adapter, such as BICDL1, BICD2 or HOOK3. The dynactin complex is built around ACTR1A/ACTB filament and consists of an actin-related filament composed of a shoulder domain, a pointed end and a barbed end. Its length is defined by its flexible shoulder domain. The soulder is composed of 2 DCTN1 subunits, 4 DCTN2 and 2 DCTN3. DCTN1/p150(glued) binds directly to microtubules and to cytoplasmic dynein.

The protein localises to the cytoplasm. Its subcellular location is the cytoskeleton. Its function is as follows. Part of the dynactin complex that activates the molecular motor dynein for ultra-processive transport along microtubules. Plays a key role in dynein-mediated retrograde transport of vesicles and organelles along microtubules by recruiting and tethering dynein to microtubules. Binds to both dynein and microtubules providing a link between specific cargos, microtubules and dynein. Essential for targeting dynein to microtubule plus ends, recruiting dynein to membranous cargos and enhancing dynein processivity (the ability to move along a microtubule for a long distance without falling off the track). Can also act as a brake to slow the dynein motor during motility along the microtubule. Can regulate microtubule stability by promoting microtubule formation, nucleation and polymerization and by inhibiting microtubule catastrophe in neurons. Inhibits microtubule catastrophe by binding both to microtubules and to tubulin, leading to enhanced microtubule stability along the axon. Plays a role in metaphase spindle orientation. Plays a role in centriole cohesion and subdistal appendage organization and function. Its recruitment to the centriole in a KIF3A-dependent manner is essential for the maintenance of centriole cohesion and the formation of subdistal appendage. Also required for microtubule anchoring at the mother centriole. Plays a role in primary cilia formation. This Drosophila melanogaster (Fruit fly) protein is Dynactin subunit 1.